The following is a 407-amino-acid chain: Glucose-1-phosphate adenylyltransferase 2 (407 aa).

Residues Tyr97, Gly162, 177 to 178 (EK), and Ser195 each bind alpha-D-glucose 1-phosphate.

Belongs to the bacterial/plant glucose-1-phosphate adenylyltransferase family. Homotetramer.

The enzyme catalyses alpha-D-glucose 1-phosphate + ATP + H(+) = ADP-alpha-D-glucose + diphosphate. Its pathway is glycan biosynthesis; glycogen biosynthesis. Its function is as follows. Involved in the biosynthesis of ADP-glucose, a building block required for the elongation reactions to produce glycogen. Catalyzes the reaction between ATP and alpha-D-glucose 1-phosphate (G1P) to produce pyrophosphate and ADP-Glc. This Vibrio cholerae serotype O1 (strain ATCC 39315 / El Tor Inaba N16961) protein is Glucose-1-phosphate adenylyltransferase 2.